A 324-amino-acid polypeptide reads, in one-letter code: Heat-inducible transcription repressor HrcA (324 aa).

This sequence belongs to the HrcA family.

In terms of biological role, negative regulator of class I heat shock genes (grpE-dnaK-dnaJ and groELS operons). Prevents heat-shock induction of these operons. The protein is Heat-inducible transcription repressor HrcA of Synechococcus sp. (strain CC9902).